The chain runs to 760 residues: uncharacterized protein (760 aa).

The segment covering 578 to 587 (RNRKQSKLRI) has biased composition (basic residues). Positions 578–604 (RNRKQSKLRISKQQEIQPQKEESVKKE) are disordered. Residues 595 to 604 (PQKEESVKKE) are compositionally biased toward basic and acidic residues.

It is found in the mitochondrion. This is an uncharacterized protein from Dictyostelium citrinum (Slime mold).